Reading from the N-terminus, the 354-residue chain is MTSLKNDVFLRALQRQRTPYTPVWMMRQAGRYLPEYRETRKKAGSFMDLCKNTDLATEVTLQPLDRFPLDAAILFSDILTIPDAMGLGLYFEEGEGPKFERTLREESDIRKLAVPDIGSELRYVTDAVSQIRRALDGRVPLIGFSGSPWTLATYMVEGRGGTDFLTIKQMAYARPDLLHHILSVTAQAVTAYLNAQIAAGAQAVMIFDSWGGALSHYAYQEFSLQYMQQIVSGLTKESEGRVVPSIVFTKGGGLWLESQAETGADALGLDWTISLGEARKRVGSKVALQGNMDPAILLSTPEAVEKEVARILADYGIGNGHVFNLGHGITQFTPHENAEAMIKAVHAISSKYHL.

Substrate is bound by residues 27–31 (RQAGR), aspartate 77, tyrosine 154, serine 209, and histidine 327.

This sequence belongs to the uroporphyrinogen decarboxylase family. Homodimer.

Its subcellular location is the cytoplasm. It carries out the reaction uroporphyrinogen III + 4 H(+) = coproporphyrinogen III + 4 CO2. It functions in the pathway porphyrin-containing compound metabolism; protoporphyrin-IX biosynthesis; coproporphyrinogen-III from 5-aminolevulinate: step 4/4. In terms of biological role, catalyzes the decarboxylation of four acetate groups of uroporphyrinogen-III to yield coproporphyrinogen-III. This is Uroporphyrinogen decarboxylase from Methylobacillus flagellatus (strain ATCC 51484 / DSM 6875 / VKM B-1610 / KT).